The chain runs to 368 residues: Probable ubiquitin receptor RAD23a (368 aa).

A Ubiquitin-like domain is found at Met1–Ser77. Positions Ala80 to Ser111 are enriched in low complexity. Positions Ala80 to Ala136 are disordered. Residues Ala116–Ala136 are compositionally biased toward polar residues. Residues Ser142–Tyr185 enclose the UBA 1 domain. The segment at Val202–Leu222 is disordered. One can recognise an STI1 domain in the interval Gly239 to Ile282. Residues Val320–Leu360 form the UBA 2 domain.

This sequence belongs to the RAD23 family. In terms of assembly, interacts with 'Lys-48'-linked polyubiquitin chains. Interacts with RPN10. Widely expressed in the whole plant.

The protein localises to the nucleus. Its subcellular location is the cytoplasm. In terms of biological role, may be involved in nucleotide excision repair. Binds and presumably selects ubiquitin-conjugates for destruction. Prefers multiubiquitin chains rather than single ubiquitins, with a binding affinity for 'Lys-48'-linked ubiquitin chains. Acts as a ubiquitin receptor that associates with the 26S proteasomal docking subunit RPN10 for the indirect recognition of ubiquitinated substrates of ubiquitin/26S proteasome-mediated proteolysis (UPP). Involved in UV tolerance in roots, specifically in dark conditions. This chain is Probable ubiquitin receptor RAD23a, found in Arabidopsis thaliana (Mouse-ear cress).